The primary structure comprises 824 residues: Leucine--tRNA ligase (824 aa).

The short motif at 41–51 is the 'HIGH' region element; it reads PYPSGTLHVGH. The 'KMSKS' region signature appears at 580 to 584; sequence KMSKS. Position 583 (lysine 583) interacts with ATP.

Belongs to the class-I aminoacyl-tRNA synthetase family.

It localises to the cytoplasm. It carries out the reaction tRNA(Leu) + L-leucine + ATP = L-leucyl-tRNA(Leu) + AMP + diphosphate. The protein is Leucine--tRNA ligase of Thermotoga maritima (strain ATCC 43589 / DSM 3109 / JCM 10099 / NBRC 100826 / MSB8).